A 113-amino-acid polypeptide reads, in one-letter code: Transcriptional activator RamA (113 aa).

Residues 9–107 (DTIVEWIDDN…HQPPGAYRKE (99 aa)) enclose the HTH araC/xylS-type domain. 2 DNA-binding regions (H-T-H motif) span residues 26 to 47 (EDIARHAGYSKWHLQRLFLQYK) and 74 to 97 (VYEICLRYGFESQQTFTRIFTRTF).

Its function is as follows. Probable transcriptional activator. The chain is Transcriptional activator RamA (ramA) from Enterobacter cloacae.